The chain runs to 899 residues: Solute carrier family 12 member 9 (899 aa).

The Cytoplasmic segment spans residues 1–44 (MTSESSPLLHYRLFSVSDGGLGPPDSSPIMTDAVTVGTGPTQRK). A helical membrane pass occupies residues 45 to 65 (LSTFFGVVVPTVLSMFSIVVF). Residues 66–80 (MRIGFVVGHAGLLQS) lie on the Extracellular side of the membrane. The chain crosses the membrane as a helical span at residues 81-101 (LLMLFVAYVIIWLTVLSVCAI). At 102–127 (STNGAVQGGGAYFMISRTLGPEFGGS) the chain is on the cytoplasmic side. A helical membrane pass occupies residues 128 to 148 (IGLMFYLANVFACGVYVLGLV). Over 149 to 176 (EAVLDVFGRDPSDVTDSLRSLPQGYGYS) the chain is Extracellular. A helical transmembrane segment spans residues 177–197 (FLYASIILLLCMAICLVGASI). Residues 198–202 (YSQAS) are Cytoplasmic-facing. Residues 203 to 223 (FFIFLLVFVVLLTILISFLAV) form a helical membrane-spanning segment. Over 224–266 (RPLTVSIRHGGNVTMTGVYTGINSSTLHNNLQADYSLDYTTGN) the chain is Extracellular. Asn-235 and Asn-246 each carry an N-linked (GlcNAc...) asparagine glycan. A helical transmembrane segment spans residues 267-287 (LMNFATVFAVMFNGCTGIMAG). Topologically, residues 288 to 304 (CNLSGELKQPSRSIPMG) are cytoplasmic. The helical transmembrane segment at 305–325 (TIIAVIITFFVYLILFIFTAF) threads the bilayer. At 326 to 347 (TCDRTLLREDYGFFRSINIWPP) the chain is on the extracellular side. Residues 348–368 (FVLIGVYATSLSASMSTLIGA) form a helical membrane-spanning segment. Residues 369-393 (SRILHALAKDDLFGVLLAPAKLVSK) lie on the Cytoplasmic side of the membrane. A helical transmembrane segment spans residues 394–414 (GGNPWGAVVYTWALVQLVLLA). Residues 415–419 (GKLNT) are Extracellular-facing. Residues 420-440 (IAGIVTVFYLIAYAAIDLACL) traverse the membrane as a helical segment. The Cytoplasmic portion of the chain corresponds to 441–469 (ALEWASAPNFRPTFRFFSWHTCLLGILSS). A helical transmembrane segment spans residues 470 to 490 (LVMMFLINPAYASGSIVLLLL). Residues 491–739 (LLGSIHFRSS…PLDLLRPQAS (249 aa)) lie on the Extracellular side of the membrane. A helical membrane pass occupies residues 740–760 (AYVDVCSLFLLQMACILNMAA). At 761–899 (SWRRYQLRVF…GLTPVTCTEL (139 aa)) the chain is on the cytoplasmic side.

It belongs to the SLC12A transporter family.

It localises to the cell membrane. The protein resides in the lysosome membrane. Functionally, seems to correspond to a subunit of a multimeric transport system and thus, additional subunits may be required for its function. May play a role in lysosomal ion flux and osmoregulation. The protein is Solute carrier family 12 member 9 (slc12a9) of Xenopus laevis (African clawed frog).